The following is a 107-amino-acid chain: UPF0060 membrane protein M446_5886 (107 aa).

4 consecutive transmembrane segments (helical) span residues 4–24 (LLAY…IWAW), 31–51 (PLWL…LTRV), 59–79 (AYAA…WAAE), and 85–105 (RWDL…LLGP).

The protein belongs to the UPF0060 family.

Its subcellular location is the cell inner membrane. This is UPF0060 membrane protein M446_5886 from Methylobacterium sp. (strain 4-46).